The following is a 304-amino-acid chain: RING-H2 finger protein ATL2 (304 aa).

Residues 30–50 (IMLSAIVILFFVVILMVFLHL) form a helical membrane-spanning segment. The segment at 119-161 (CAVCLSEFEESETGRVLPNCQHTFHVDCIDMWFHSHSTCPLCR) adopts an RING-type; atypical zinc-finger fold. Residues 194-304 (EPSSSSGLTD…DIERGGEESR (111 aa)) are disordered. Residues 227-244 (VPRRTFSEFEDELTRRDS) show a composition bias toward basic and acidic residues. Polar residues predominate over residues 283 to 293 (PTLSCRIQMTE). A compositionally biased stretch (basic and acidic residues) spans 295-304 (DIERGGEESR).

It belongs to the RING-type zinc finger family. ATL subfamily. Preferentially expressed around the apical meristem region.

The protein localises to the membrane. It carries out the reaction S-ubiquitinyl-[E2 ubiquitin-conjugating enzyme]-L-cysteine + [acceptor protein]-L-lysine = [E2 ubiquitin-conjugating enzyme]-L-cysteine + N(6)-ubiquitinyl-[acceptor protein]-L-lysine.. Its pathway is protein modification; protein ubiquitination. In terms of biological role, may be involved in the early steps of the plant defense signaling pathway. In Arabidopsis thaliana (Mouse-ear cress), this protein is RING-H2 finger protein ATL2 (ATL2).